A 681-amino-acid polypeptide reads, in one-letter code: UvrABC system protein C (681 aa).

The GIY-YIG domain occupies 16–95 (DSPGVYKFRD…IKEYDPRFNV (80 aa)). In terms of domain architecture, UVR spans 208–243 (GTYIRRLERQMTDAAEEMEYEKAARLRDDIGALKKA). The tract at residues 650–681 (EIMEDEEPGTTAGSSQEPVSAGTSDERRGQET) is disordered. Residues 660-672 (TAGSSQEPVSAGT) are compositionally biased toward polar residues.

Belongs to the UvrC family. Interacts with UvrB in an incision complex.

Its subcellular location is the cytoplasm. In terms of biological role, the UvrABC repair system catalyzes the recognition and processing of DNA lesions. UvrC both incises the 5' and 3' sides of the lesion. The N-terminal half is responsible for the 3' incision and the C-terminal half is responsible for the 5' incision. This is UvrABC system protein C from Streptomyces avermitilis (strain ATCC 31267 / DSM 46492 / JCM 5070 / NBRC 14893 / NCIMB 12804 / NRRL 8165 / MA-4680).